The sequence spans 122 residues: uncharacterized protein (122 aa).

2 helical membrane-spanning segments follow: residues 9–29 (VATVDAIFAISSSTFLWSTWV) and 60–80 (LFSFTSVLTVSTFTFASCLIM).

Its subcellular location is the cytoplasm. It is found in the membrane. This is an uncharacterized protein from Schizosaccharomyces pombe (strain 972 / ATCC 24843) (Fission yeast).